The sequence spans 142 residues: MVLSGSDKTNVKGIFSKIGGQAEDYGAEALERMFATFPQTKTYFPHFDVSPGSAQVKAHGKKVAAALVEAANHIDDIATALSKLSDLHAQKLRVDPVNFKLLGQCFLVVVAIHNPSALTPEVHASLDKFLCAVGNVLTAKYR.

The region spanning 2 to 142 (VLSGSDKTNV…VGNVLTAKYR (141 aa)) is the Globin domain. Residue His-59 participates in O2 binding. His-88 provides a ligand contact to heme b.

The protein belongs to the globin family. As to quaternary structure, heterotetramer of two alpha chains and two beta chains. In terms of tissue distribution, red blood cells.

In terms of biological role, involved in oxygen transport from the lung to the various peripheral tissues. The protein is Hemoglobin subunit alpha-A (HBAA) of Ara ararauna (Blue-and-yellow macaw).